A 106-amino-acid polypeptide reads, in one-letter code: Cell division topological specificity factor (106 aa).

The protein belongs to the MinE family.

Functionally, prevents the cell division inhibition by proteins MinC and MinD at internal division sites while permitting inhibition at polar sites. This ensures cell division at the proper site by restricting the formation of a division septum at the midpoint of the long axis of the cell. The polypeptide is Cell division topological specificity factor (Prochlorococcus marinus (strain SARG / CCMP1375 / SS120)).